A 439-amino-acid chain; its full sequence is Methylenetetrahydrofolate--tRNA-(uracil-5-)-methyltransferase TrmFO (439 aa).

8 to 13 contributes to the FAD binding site; it reads GGGLAG.

It belongs to the MnmG family. TrmFO subfamily. Requires FAD as cofactor.

It is found in the cytoplasm. It carries out the reaction uridine(54) in tRNA + (6R)-5,10-methylene-5,6,7,8-tetrahydrofolate + NADH + H(+) = 5-methyluridine(54) in tRNA + (6S)-5,6,7,8-tetrahydrofolate + NAD(+). The catalysed reaction is uridine(54) in tRNA + (6R)-5,10-methylene-5,6,7,8-tetrahydrofolate + NADPH + H(+) = 5-methyluridine(54) in tRNA + (6S)-5,6,7,8-tetrahydrofolate + NADP(+). In terms of biological role, catalyzes the folate-dependent formation of 5-methyl-uridine at position 54 (M-5-U54) in all tRNAs. This chain is Methylenetetrahydrofolate--tRNA-(uracil-5-)-methyltransferase TrmFO, found in Dictyoglomus thermophilum (strain ATCC 35947 / DSM 3960 / H-6-12).